A 301-amino-acid chain; its full sequence is GTP cyclohydrolase FolE2 (301 aa).

This sequence belongs to the GTP cyclohydrolase IV family.

It catalyses the reaction GTP + H2O = 7,8-dihydroneopterin 3'-triphosphate + formate + H(+). The protein operates within cofactor biosynthesis; 7,8-dihydroneopterin triphosphate biosynthesis; 7,8-dihydroneopterin triphosphate from GTP: step 1/1. In terms of biological role, converts GTP to 7,8-dihydroneopterin triphosphate. The polypeptide is GTP cyclohydrolase FolE2 (Pseudomonas syringae pv. syringae (strain B728a)).